Here is a 144-residue protein sequence, read N- to C-terminus: 3-dehydroquinate dehydratase (144 aa).

Tyr23 serves as the catalytic Proton acceptor. 3 residues coordinate substrate: Asn74, His80, and Asp87. His100 acts as the Proton donor in catalysis. Substrate-binding positions include 101 to 102 (LS) and Arg111.

Belongs to the type-II 3-dehydroquinase family. As to quaternary structure, homododecamer.

The catalysed reaction is 3-dehydroquinate = 3-dehydroshikimate + H2O. It participates in metabolic intermediate biosynthesis; chorismate biosynthesis; chorismate from D-erythrose 4-phosphate and phosphoenolpyruvate: step 3/7. In terms of biological role, catalyzes a trans-dehydration via an enolate intermediate. The chain is 3-dehydroquinate dehydratase from Hydrogenovibrio crunogenus (strain DSM 25203 / XCL-2) (Thiomicrospira crunogena).